A 30-amino-acid polypeptide reads, in one-letter code: Cliotide T19 (30 aa).

The cyclopeptide (Gly-Asn) cross-link spans 1–30; it reads GSVIKCGESCLLGKCYTPGCTCSRPICKKN. 3 disulfide bridges follow: Cys6–Cys20, Cys10–Cys22, and Cys15–Cys27.

Post-translationally, contains 3 disulfide bonds. In terms of processing, this is a cyclic peptide. In terms of tissue distribution, expressed in root nodules but not in seed.

Its function is as follows. Probably participates in a plant defense mechanism. Active against Gram-negative bacterium E.coli ATCC 700926 (MIC=0.6 uM) under low-salt conditions. Not active against Gram-positive bacterium S.aureus ATCC 12600 up to a concentration of 100 uM under low-salt conditions. Exhibits immunomodulatory activity but no cytotoxicity in vitro. The sequence is that of Cliotide T19 from Clitoria ternatea (Butterfly pea).